The chain runs to 68 residues: Antimicrobial peptide Eval655 (68 aa).

An N-terminal signal peptide occupies residues 1–23; it reads MKTQFVVLLVALVLLQMFAQSEA. The residue at position 36 (L36) is a Leucine amide. A propeptide spanning residues 37–68 is cleaved from the precursor; the sequence is GKRGLKNLDDFDDIFDDDLSSADLEFLKQLMR.

Belongs to the non-disulfide-bridged peptide (NDBP) superfamily. Short antimicrobial peptide (group 4) family. In terms of tissue distribution, expressed by the venom gland.

It is found in the secreted. Functionally, probable antimicrobial peptide. Shows low inhibitory activity against herpes simplex virus type 1 (HSV-1). This chain is Antimicrobial peptide Eval655, found in Euscorpiops validus (Scorpion).